A 718-amino-acid chain; its full sequence is Catalase-peroxidase 1 (718 aa).

The segment at residues 93–221 (WHSAGTYRIA…LAAVMMGLIY (129 aa)) is a cross-link (tryptophyl-tyrosyl-methioninium (Trp-Tyr) (with M-247)). Residue H94 is the Proton acceptor of the active site. A cross-link (tryptophyl-tyrosyl-methioninium (Tyr-Met) (with W-93)) is located at residues 221–247 (YVNPEGVDGNPDPLKTAQDMRVTFARM). Position 262 (H262) interacts with heme b.

It belongs to the peroxidase family. Peroxidase/catalase subfamily. As to quaternary structure, homodimer or homotetramer. Heme b is required as a cofactor. In terms of processing, formation of the three residue Trp-Tyr-Met cross-link is important for the catalase, but not the peroxidase activity of the enzyme.

The enzyme catalyses H2O2 + AH2 = A + 2 H2O. It catalyses the reaction 2 H2O2 = O2 + 2 H2O. Its function is as follows. Bifunctional enzyme with both catalase and broad-spectrum peroxidase activity. The chain is Catalase-peroxidase 1 from Shewanella amazonensis (strain ATCC BAA-1098 / SB2B).